A 163-amino-acid polypeptide reads, in one-letter code: Neurotrophin-3 (163 aa).

The first 3 residues, 1–3 (IQS), serve as a signal peptide directing secretion. The propeptide occupies 4-119 (TSMDQGILTE…VLNRTSRRKR (116 aa)). Asparagine 112 carries an N-linked (GlcNAc...) asparagine glycan. The interval 114–133 (TSRRKREGKSHRGEYSVCDS) is disordered. Residues 123 to 133 (SHRGEYSVCDS) show a composition bias toward basic and acidic residues.

This sequence belongs to the NGF-beta family.

It is found in the secreted. Seems to promote the survival of visceral and proprioceptive sensory neurons. This is Neurotrophin-3 (NTF3) from Lichanura trivirgata (Rosy boa).